A 181-amino-acid polypeptide reads, in one-letter code: UPF0302 protein LMHCC_0635 (181 aa).

The protein belongs to the UPF0302 family.

The chain is UPF0302 protein LMHCC_0635 from Listeria monocytogenes serotype 4a (strain HCC23).